Here is a 436-residue protein sequence, read N- to C-terminus: Trigger factor (436 aa).

In terms of domain architecture, PPIase FKBP-type spans 161–246 (DDRVTVDFVG…VNKVEGLSLP (86 aa)).

This sequence belongs to the FKBP-type PPIase family. Tig subfamily.

Its subcellular location is the cytoplasm. It carries out the reaction [protein]-peptidylproline (omega=180) = [protein]-peptidylproline (omega=0). Its function is as follows. Involved in protein export. Acts as a chaperone by maintaining the newly synthesized protein in an open conformation. Functions as a peptidyl-prolyl cis-trans isomerase. The sequence is that of Trigger factor from Pseudoalteromonas atlantica (strain T6c / ATCC BAA-1087).